The following is a 189-amino-acid chain: HGPRTase-like protein 1 (189 aa).

Belongs to the purine/pyrimidine phosphoribosyltransferase family. Archaeal HPRT subfamily.

In terms of biological role, may catalyze a purine salvage reaction, the substrate is unknown. This is HGPRTase-like protein 1 from Natrialba magadii (strain ATCC 43099 / DSM 3394 / CCM 3739 / CIP 104546 / IAM 13178 / JCM 8861 / NBRC 102185 / NCIMB 2190 / MS3) (Natronobacterium magadii).